The sequence spans 185 residues: Peptidyl-tRNA hydrolase (185 aa).

Position 14 (tyrosine 14) interacts with tRNA. Histidine 19 (proton acceptor) is an active-site residue. TRNA is bound by residues tyrosine 65, asparagine 67, and asparagine 113.

This sequence belongs to the PTH family. As to quaternary structure, monomer.

Its subcellular location is the cytoplasm. It carries out the reaction an N-acyl-L-alpha-aminoacyl-tRNA + H2O = an N-acyl-L-amino acid + a tRNA + H(+). In terms of biological role, hydrolyzes ribosome-free peptidyl-tRNAs (with 1 or more amino acids incorporated), which drop off the ribosome during protein synthesis, or as a result of ribosome stalling. Its function is as follows. Catalyzes the release of premature peptidyl moieties from peptidyl-tRNA molecules trapped in stalled 50S ribosomal subunits, and thus maintains levels of free tRNAs and 50S ribosomes. The polypeptide is Peptidyl-tRNA hydrolase (Rickettsia akari (strain Hartford)).